Here is a 148-residue protein sequence, read N- to C-terminus: Azurin (148 aa).

The first 20 residues, 1–20 (MLRKLAAVSLLSLLSAPLLA), serve as a signal peptide directing secretion. One can recognise a Plastocyanin-like domain in the interval 21 to 148 (AECSVDIQGN…ALMKGTLTLK (128 aa)). Cysteines 23 and 46 form a disulfide. Cu cation-binding residues include histidine 66, cysteine 132, histidine 137, and methionine 141.

Its subcellular location is the periplasm. In terms of biological role, transfers electrons from cytochrome c551 to cytochrome oxidase. This Pseudomonas aeruginosa (strain ATCC 15692 / DSM 22644 / CIP 104116 / JCM 14847 / LMG 12228 / 1C / PRS 101 / PAO1) protein is Azurin (azu).